A 487-amino-acid chain; its full sequence is Glycogen synthase (487 aa).

Lys20 lines the ADP-alpha-D-glucose pocket.

It belongs to the glycosyltransferase 1 family. Bacterial/plant glycogen synthase subfamily.

It catalyses the reaction [(1-&gt;4)-alpha-D-glucosyl](n) + ADP-alpha-D-glucose = [(1-&gt;4)-alpha-D-glucosyl](n+1) + ADP + H(+). Its pathway is glycan biosynthesis; glycogen biosynthesis. Synthesizes alpha-1,4-glucan chains using ADP-glucose. The polypeptide is Glycogen synthase (Aliivibrio fischeri (strain MJ11) (Vibrio fischeri)).